Reading from the N-terminus, the 252-residue chain is Receptor expression-enhancing protein 2 (252 aa).

Helical transmembrane passes span 1–21 and 35–55; these read MVSW…YPAY and YVKW…ETLT. A Phosphoserine modification is found at Ser-150. The tract at residues 165 to 252 is disordered; the sequence is LQRPDGRLRP…KKTSGGGDSA (88 aa). The segment covering 203–217 has biased composition (basic and acidic residues); that stretch reads SRTEASEDDMGDKAP.

The protein belongs to the DP1 family. Interacts with odorant receptor proteins. Detected in brain, heart and skeletal muscle, and at low levels in placenta, kidney and pancreas. Expressed in circumvallate papillae.

Its subcellular location is the membrane. Functionally, required for endoplasmic reticulum (ER) network formation, shaping and remodeling. May enhance the cell surface expression of odorant receptors. In Homo sapiens (Human), this protein is Receptor expression-enhancing protein 2 (REEP2).